We begin with the raw amino-acid sequence, 368 residues long: DNA-directed RNA polymerase subunit alpha (368 aa).

The tract at residues 1 to 231 (MLWKGFQKPK…DHMNIFINFE (231 aa)) is alpha N-terminal domain (alpha-NTD). Residues 243–368 (KPEIRNENLN…GFGGDNNPGF (126 aa)) form an alpha C-terminal domain (alpha-CTD) region.

The protein belongs to the RNA polymerase alpha chain family. As to quaternary structure, homodimer. The RNAP catalytic core consists of 2 alpha, 1 beta, 1 beta' and 1 omega subunit. When a sigma factor is associated with the core the holoenzyme is formed, which can initiate transcription.

The catalysed reaction is RNA(n) + a ribonucleoside 5'-triphosphate = RNA(n+1) + diphosphate. Functionally, DNA-dependent RNA polymerase catalyzes the transcription of DNA into RNA using the four ribonucleoside triphosphates as substrates. The polypeptide is DNA-directed RNA polymerase subunit alpha (Koribacter versatilis (strain Ellin345)).